Here is a 99-residue protein sequence, read N- to C-terminus: A-type ATP synthase subunit F (99 aa).

This sequence belongs to the V-ATPase F subunit family. Has multiple subunits with at least A(3), B(3), C, D, E, F, H, I and proteolipid K(x).

It localises to the cell membrane. Functionally, component of the A-type ATP synthase that produces ATP from ADP in the presence of a proton gradient across the membrane. In Methanococcus maripaludis (strain C7 / ATCC BAA-1331), this protein is A-type ATP synthase subunit F.